A 973-amino-acid chain; its full sequence is Piwi-like protein 2 (973 aa).

Residues 28-65 (WPQASKPLDPALGRGAPAGRGHVFGKPEEPSTQRGPAQ) form a disordered region. Residues 34-48 (PLDPALGRGAPAGRG) show a composition bias toward low complexity. At R47 the chain carries Symmetric dimethylarginine. An omega-N-methylarginine; by PRMT5; alternate mark is found at R76 and R97. R76 carries the symmetric dimethylarginine; by PRMT5; alternate modification. R97 is modified (symmetric dimethylarginine; alternate). At R102 the chain carries Symmetric dimethylarginine; by PRMT5; alternate. At R102 the chain carries Omega-N-methylarginine; alternate. Symmetric dimethylarginine is present on residues R146 and R158. The tract at residues 162-199 (GISREVDKPPCTFSTPSRGPPQLSSPPALPQSPLHSPD) is disordered. Residue R165 is modified to Symmetric dimethylarginine; by PRMT5. Positions 389–502 (CVLDVMHAIY…LLPELSFMTG (114 aa)) constitute a PAZ domain. R551 bears the Symmetric dimethylarginine; by PRMT5 mark. The Piwi domain maps to 668–959 (MVVCIIMGPR…LAFLSGHILH (292 aa)). Catalysis depends on residues D745, E783, D815, and H948.

It belongs to the argonaute family. Piwi subfamily. As to quaternary structure, interacts with DDX4, MAEL, EIF3A, EIF4E, EIF4G, PRMT5 and WDR77. Associates with EIF4E- and EIF4G-containing m7G cap-binding complexes. Interacts (when methylated on arginine residues) with TDRD1 and TDRKH/TDRD2. Interacts with TDRD12. Component of the PET complex, at least composed of EXD1, PIWIL2, TDRD12 and piRNAs. Interacts with MOV10L1. Interacts with GPAT2. Interacts with TEX19. Interacts with GSK3B. Interacts (via PIWI domain) with BMAL1 and CLOCK. Interacts with TEX15. Mg(2+) serves as cofactor. Arginine methylation by PRMT5 is required for the interaction with Tudor domain-containing protein TDRD1 and subsequent localization to the meiotic nuage, also named P granule. As to expression, expressed in adult testis and in most tumors.

Its subcellular location is the cytoplasm. Endoribonuclease that plays a central role during spermatogenesis by repressing transposable elements and preventing their mobilization, which is essential for the germline integrity. Plays an essential role in meiotic differentiation of spermatocytes, germ cell differentiation and in self-renewal of spermatogonial stem cells. Acts via the piRNA metabolic process, which mediates the repression of transposable elements during meiosis by forming complexes composed of piRNAs and Piwi proteins and govern the methylation and subsequent repression of transposons. During piRNA biosynthesis, plays a key role in the piRNA amplification loop, also named ping-pong amplification cycle, by acting as a 'slicer-competent' piRNA endoribonuclease that cleaves primary piRNAs, which are then loaded onto 'slicer-incompetent' PIWIL4. PIWIL2 slicing produces a pre-miRNA intermediate, which is then processed in mature piRNAs, and as well as a 16 nucleotide by-product that is degraded. Required for PIWIL4/MIWI2 nuclear localization and association with secondary piRNAs antisense. Besides their function in transposable elements repression, piRNAs are probably involved in other processes during meiosis such as translation regulation. Indirectly modulates expression of genes such as PDGFRB, SLC2A1, ITGA6, GJA7, THY1, CD9 and STRA8. When overexpressed, acts as an oncogene by inhibition of apoptosis and promotion of proliferation in tumors. Represses circadian rhythms by promoting the stability and activity of core clock components BMAL1 and CLOCK by inhibiting GSK3B-mediated phosphorylation and ubiquitination-dependent degradation of these proteins. In Homo sapiens (Human), this protein is Piwi-like protein 2 (PIWIL2).